The chain runs to 100 residues: Putative septation protein SpoVG (100 aa).

The protein belongs to the SpoVG family.

In terms of biological role, could be involved in septation. The sequence is that of Putative septation protein SpoVG from Staphylococcus aureus (strain JH1).